The sequence spans 512 residues: Glycerol kinase, glycosomal (512 aa).

Thr11 provides a ligand contact to substrate. Position 15 (Arg15) interacts with ATP. Residues Arg84, Tyr139, and Asp254 each contribute to the substrate site. Residues Thr276, Gly321, and 422–426 (GLSKN) contribute to the ATP site. A Microbody targeting signal motif is present at residues 510-512 (AKL).

It belongs to the FGGY kinase family.

It localises to the glycosome. It carries out the reaction glycerol + ATP = sn-glycerol 3-phosphate + ADP + H(+). It functions in the pathway polyol metabolism; glycerol degradation via glycerol kinase pathway; sn-glycerol 3-phosphate from glycerol: step 1/1. Its function is as follows. Catalyzes the phosphorylation of glycerol using ATP. Under anoxic conditions, when glycerol 3-phosphate accumulates in the glycosome, it catalyzes the reverse reaction, maintaining the ATP balance. Key enzyme for the survival of bloodstream forms under anoxic conditions. The polypeptide is Glycerol kinase, glycosomal (GK) (Trypanosoma brucei brucei).